The following is a 318-amino-acid chain: ATP phosphoribosyltransferase regulatory subunit (318 aa).

This sequence belongs to the class-II aminoacyl-tRNA synthetase family. HisZ subfamily. As to quaternary structure, heteromultimer composed of HisG and HisZ subunits.

The protein resides in the cytoplasm. It participates in amino-acid biosynthesis; L-histidine biosynthesis; L-histidine from 5-phospho-alpha-D-ribose 1-diphosphate: step 1/9. Its function is as follows. Required for the first step of histidine biosynthesis. May allow the feedback regulation of ATP phosphoribosyltransferase activity by histidine. The protein is ATP phosphoribosyltransferase regulatory subunit of Lactococcus lactis subsp. cremoris (strain MG1363).